A 331-amino-acid polypeptide reads, in one-letter code: Beta-ketoacyl-[acyl-carrier-protein] synthase III (331 aa).

Active-site residues include Cys115 and His255. Positions 256–260 (QANFR) are ACP-binding. Residue Asn285 is part of the active site.

It belongs to the thiolase-like superfamily. FabH family. In terms of assembly, homodimer.

It localises to the cytoplasm. The catalysed reaction is malonyl-[ACP] + acetyl-CoA + H(+) = 3-oxobutanoyl-[ACP] + CO2 + CoA. Its pathway is lipid metabolism; fatty acid biosynthesis. Functionally, catalyzes the condensation reaction of fatty acid synthesis by the addition to an acyl acceptor of two carbons from malonyl-ACP. Catalyzes the first condensation reaction which initiates fatty acid synthesis and may therefore play a role in governing the total rate of fatty acid production. Possesses both acetoacetyl-ACP synthase and acetyl transacylase activities. Its substrate specificity determines the biosynthesis of branched-chain and/or straight-chain of fatty acids. This Helicobacter pylori (strain ATCC 700392 / 26695) (Campylobacter pylori) protein is Beta-ketoacyl-[acyl-carrier-protein] synthase III.